A 289-amino-acid chain; its full sequence is Protoheme IX farnesyltransferase (289 aa).

The next 9 membrane-spanning stretches (helical) occupy residues 18–38 (VTSL…EQSP), 40–60 (GFLI…SFIF), 87–107 (VVQA…VLAV), 111–131 (LLTA…YTIF), 139–159 (NIVI…AAIG), 168–188 (SLFM…AIFL), 212–232 (SIFF…FLES), 234–254 (MGFL…ILSY), and 269–289 (FFFS…DHLI).

Belongs to the UbiA prenyltransferase family. Protoheme IX farnesyltransferase subfamily.

It localises to the cell inner membrane. The catalysed reaction is heme b + (2E,6E)-farnesyl diphosphate + H2O = Fe(II)-heme o + diphosphate. The protein operates within porphyrin-containing compound metabolism; heme O biosynthesis; heme O from protoheme: step 1/1. Converts heme B (protoheme IX) to heme O by substitution of the vinyl group on carbon 2 of heme B porphyrin ring with a hydroxyethyl farnesyl side group. This chain is Protoheme IX farnesyltransferase, found in Leptospira interrogans serogroup Icterohaemorrhagiae serovar copenhageni (strain Fiocruz L1-130).